We begin with the raw amino-acid sequence, 326 residues long: Transmembrane protein 171 (326 aa).

The next 4 helical transmembrane spans lie at 22-42, 57-77, 114-134, and 161-181; these read IFFL…LSIF, MMLK…VILA, LIFG…GIWV, and FLSL…FFVV. Residues 229 to 326 form a disordered region; it reads FPESSASAAA…LSPSSEPSPP (98 aa). The segment covering 230–240 has biased composition (low complexity); the sequence is PESSASAAARS. The segment covering 257-266 has biased composition (polar residues); sequence SIFQSGSPTP. 2 stretches are compositionally biased toward low complexity: residues 288–302 and 312–326; these read SSSE…LSEL and ATTT…PSPP.

It is found in the membrane. This Bos taurus (Bovine) protein is Transmembrane protein 171 (TMEM171).